The sequence spans 147 residues: uncharacterized protein (147 aa).

The protein belongs to the MG185/MG260 family.

This is an uncharacterized protein from Mycoplasma pneumoniae (strain ATCC 29342 / M129 / Subtype 1) (Mycoplasmoides pneumoniae).